A 1245-amino-acid polypeptide reads, in one-letter code: Pesticidal crystal protein Cry5Ba (1245 aa).

Residues 1219 to 1245 (PLPTDDQSSDGNTTSNTNSNTSMNNNQ) form a disordered region. Residues 1222–1245 (TDDQSSDGNTTSNTNSNTSMNNNQ) are compositionally biased toward low complexity.

This sequence belongs to the delta endotoxin family.

Promotes colloidosmotic lysis by binding to the midgut epithelial cells of hymenopteran species. The protein is Pesticidal crystal protein Cry5Ba (cry5Ba) of Bacillus thuringiensis.